A 433-amino-acid chain; its full sequence is Phosphomethylpyrimidine synthase (433 aa).

Residues Asn-69, Met-98, Tyr-127, His-163, 185–187 (SRG), 226–229 (DALR), and Glu-265 each bind substrate. His-269 contacts Zn(2+). Tyr-292 contacts substrate. Residue His-333 coordinates Zn(2+). [4Fe-4S] cluster contacts are provided by Cys-409, Cys-412, and Cys-416.

It belongs to the ThiC family. Requires [4Fe-4S] cluster as cofactor.

It carries out the reaction 5-amino-1-(5-phospho-beta-D-ribosyl)imidazole + S-adenosyl-L-methionine = 4-amino-2-methyl-5-(phosphooxymethyl)pyrimidine + CO + 5'-deoxyadenosine + formate + L-methionine + 3 H(+). It functions in the pathway cofactor biosynthesis; thiamine diphosphate biosynthesis. Its function is as follows. Catalyzes the synthesis of the hydroxymethylpyrimidine phosphate (HMP-P) moiety of thiamine from aminoimidazole ribotide (AIR) in a radical S-adenosyl-L-methionine (SAM)-dependent reaction. The chain is Phosphomethylpyrimidine synthase from Finegoldia magna (strain ATCC 29328 / DSM 20472 / WAL 2508) (Peptostreptococcus magnus).